The sequence spans 415 residues: Enolase (415 aa).

Position 161 (Gln-161) interacts with (2R)-2-phosphoglycerate. Glu-203 functions as the Proton donor in the catalytic mechanism. Mg(2+) contacts are provided by Asp-240, Glu-281, and Asp-308. Positions 333, 362, 363, and 384 each coordinate (2R)-2-phosphoglycerate. Residue Lys-333 is the Proton acceptor of the active site.

This sequence belongs to the enolase family. The cofactor is Mg(2+).

It is found in the cytoplasm. Its subcellular location is the secreted. The protein localises to the cell surface. The catalysed reaction is (2R)-2-phosphoglycerate = phosphoenolpyruvate + H2O. It participates in carbohydrate degradation; glycolysis; pyruvate from D-glyceraldehyde 3-phosphate: step 4/5. Functionally, catalyzes the reversible conversion of 2-phosphoglycerate (2-PG) into phosphoenolpyruvate (PEP). It is essential for the degradation of carbohydrates via glycolysis. The polypeptide is Enolase (Campylobacter hominis (strain ATCC BAA-381 / DSM 21671 / CCUG 45161 / LMG 19568 / NCTC 13146 / CH001A)).